A 157-amino-acid polypeptide reads, in one-letter code: MFGTSVSALCLLFLLSVCTACYISNCPIGGKRSALAFPSRKCMACGPGDRGRCFGPNICCGEGMGCYVGSPEAAGCVEENYLPSPCEAGGRVCGSEEGRCAAPGICCDVEGCSIDQSCTEEDEAEYISQSVSSSHGHDLLMKLLNMISHTPPHRVHK.

The N-terminal stretch at 1 to 20 is a signal peptide; it reads MFGTSVSALCLLFLLSVCTA. Residues Cys-21 and Cys-26 are joined by a disulfide bond. The residue at position 29 (Gly-29) is a Glycine amide. 7 disulfide bridges follow: Cys-42/Cys-86, Cys-45/Cys-59, Cys-53/Cys-76, Cys-60/Cys-66, Cys-93/Cys-106, Cys-100/Cys-118, and Cys-107/Cys-112.

This sequence belongs to the vasopressin/oxytocin family. In terms of processing, seven disulfide bonds are present in neurophysin.

The protein resides in the secreted. Isotocin causes contraction of smooth muscles. This is Isotocin-neurophysin IT 1 from Oncorhynchus keta (Chum salmon).